The sequence spans 376 residues: Queuine tRNA-ribosyltransferase (376 aa).

The Proton acceptor role is filled by aspartate 90. Substrate contacts are provided by residues 90–94 (DSGGF), aspartate 144, glutamine 193, and glycine 220. An RNA binding region spans residues 251-257 (GVGTPED). Aspartate 270 acts as the Nucleophile in catalysis. The RNA binding; important for wobble base 34 recognition stretch occupies residues 275–279 (TRNAR). Residues cysteine 308, cysteine 310, cysteine 313, and histidine 339 each coordinate Zn(2+).

This sequence belongs to the queuine tRNA-ribosyltransferase family. Homodimer. Within each dimer, one monomer is responsible for RNA recognition and catalysis, while the other monomer binds to the replacement base PreQ1. It depends on Zn(2+) as a cofactor.

It carries out the reaction 7-aminomethyl-7-carbaguanine + guanosine(34) in tRNA = 7-aminomethyl-7-carbaguanosine(34) in tRNA + guanine. The protein operates within tRNA modification; tRNA-queuosine biosynthesis. Catalyzes the base-exchange of a guanine (G) residue with the queuine precursor 7-aminomethyl-7-deazaguanine (PreQ1) at position 34 (anticodon wobble position) in tRNAs with GU(N) anticodons (tRNA-Asp, -Asn, -His and -Tyr). Catalysis occurs through a double-displacement mechanism. The nucleophile active site attacks the C1' of nucleotide 34 to detach the guanine base from the RNA, forming a covalent enzyme-RNA intermediate. The proton acceptor active site deprotonates the incoming PreQ1, allowing a nucleophilic attack on the C1' of the ribose to form the product. After dissociation, two additional enzymatic reactions on the tRNA convert PreQ1 to queuine (Q), resulting in the hypermodified nucleoside queuosine (7-(((4,5-cis-dihydroxy-2-cyclopenten-1-yl)amino)methyl)-7-deazaguanosine). This chain is Queuine tRNA-ribosyltransferase, found in Campylobacter concisus (strain 13826).